Consider the following 462-residue polypeptide: Glycine--tRNA ligase (462 aa).

Residues arginine 99 and glutamate 174 each contribute to the substrate site. Residues 206 to 208, 216 to 221, 290 to 291, and 334 to 337 each bind ATP; these read RNE, FRTREF, EL, and GADR. Substrate is bound at residue 221–225; that stretch reads FEQME. 330 to 334 contacts substrate; sequence EPSLG.

It belongs to the class-II aminoacyl-tRNA synthetase family. As to quaternary structure, homodimer.

Its subcellular location is the cytoplasm. It carries out the reaction tRNA(Gly) + glycine + ATP = glycyl-tRNA(Gly) + AMP + diphosphate. Catalyzes the attachment of glycine to tRNA(Gly). The protein is Glycine--tRNA ligase of Macrococcus caseolyticus (strain JCSC5402) (Macrococcoides caseolyticum).